Reading from the N-terminus, the 602-residue chain is Elongation factor 4 (602 aa).

Positions 7 to 189 constitute a tr-type G domain; it reads RNIRNFSIIA…AIVQRIPAPQ (183 aa). GTP contacts are provided by residues 19 to 24 and 136 to 139; these read DHGKST and NKID.

Belongs to the TRAFAC class translation factor GTPase superfamily. Classic translation factor GTPase family. LepA subfamily.

The protein localises to the cell inner membrane. The catalysed reaction is GTP + H2O = GDP + phosphate + H(+). Required for accurate and efficient protein synthesis under certain stress conditions. May act as a fidelity factor of the translation reaction, by catalyzing a one-codon backward translocation of tRNAs on improperly translocated ribosomes. Back-translocation proceeds from a post-translocation (POST) complex to a pre-translocation (PRE) complex, thus giving elongation factor G a second chance to translocate the tRNAs correctly. Binds to ribosomes in a GTP-dependent manner. In Xylella fastidiosa (strain M12), this protein is Elongation factor 4.